A 179-amino-acid chain; its full sequence is Large ribosomal subunit protein uL5 (179 aa).

Belongs to the universal ribosomal protein uL5 family. Part of the 50S ribosomal subunit; part of the 5S rRNA/L5/L18/L25 subcomplex. Contacts the 5S rRNA and the P site tRNA. Forms a bridge to the 30S subunit in the 70S ribosome.

Its function is as follows. This is one of the proteins that bind and probably mediate the attachment of the 5S RNA into the large ribosomal subunit, where it forms part of the central protuberance. In the 70S ribosome it contacts protein S13 of the 30S subunit (bridge B1b), connecting the 2 subunits; this bridge is implicated in subunit movement. Contacts the P site tRNA; the 5S rRNA and some of its associated proteins might help stabilize positioning of ribosome-bound tRNAs. The sequence is that of Large ribosomal subunit protein uL5 from Buchnera aphidicola subsp. Acyrthosiphon pisum (strain APS) (Acyrthosiphon pisum symbiotic bacterium).